The primary structure comprises 594 residues: Bifunctional lycopene cyclase/phytoene synthase (594 aa).

The tract at residues 1-249 (MGLDYLMVHV…VVFGIAAMHN (249 aa)) is lycopene beta-cyclase. 7 consecutive transmembrane segments (helical) span residues 3 to 23 (LDYL…LTIL), 35 to 55 (KIVL…SYLI), 77 to 97 (LEEV…YIIF), 130 to 150 (LGTL…YIGG), 153 to 173 (MYLG…WVLM), 176 to 196 (FLLA…TLYL), and 227 to 247 (IEEA…IAAM). A phytoene synthase region spans residues 256–594 (YKAFISTTAM…RFKRAWLAML (339 aa)).

The protein in the N-terminal section; belongs to the lycopene beta-cyclase family. In the C-terminal section; belongs to the phytoene/squalene synthase family.

It localises to the membrane. It carries out the reaction all-trans-lycopene = gamma-carotene. It catalyses the reaction gamma-carotene = all-trans-beta-carotene. The catalysed reaction is 2 (2E,6E,10E)-geranylgeranyl diphosphate = 15-cis-phytoene + 2 diphosphate. Its pathway is carotenoid biosynthesis; beta-carotene biosynthesis. It participates in carotenoid biosynthesis; phytoene biosynthesis; all-trans-phytoene from geranylgeranyl diphosphate: step 1/1. In terms of biological role, bifunctional enzyme that catalyzes the reactions from geranylgeranyl diphosphate to phytoene (phytoene synthase) and lycopene to beta-carotene via the intermediate gamma-carotene (lycopene cyclase). This is Bifunctional lycopene cyclase/phytoene synthase from Arthroderma gypseum (strain ATCC MYA-4604 / CBS 118893) (Microsporum gypseum).